Here is a 209-residue protein sequence, read N- to C-terminus: Leucyl/phenylalanyl-tRNA--protein transferase (209 aa).

This sequence belongs to the L/F-transferase family.

It localises to the cytoplasm. The enzyme catalyses N-terminal L-lysyl-[protein] + L-leucyl-tRNA(Leu) = N-terminal L-leucyl-L-lysyl-[protein] + tRNA(Leu) + H(+). It catalyses the reaction N-terminal L-arginyl-[protein] + L-leucyl-tRNA(Leu) = N-terminal L-leucyl-L-arginyl-[protein] + tRNA(Leu) + H(+). It carries out the reaction L-phenylalanyl-tRNA(Phe) + an N-terminal L-alpha-aminoacyl-[protein] = an N-terminal L-phenylalanyl-L-alpha-aminoacyl-[protein] + tRNA(Phe). Functionally, functions in the N-end rule pathway of protein degradation where it conjugates Leu, Phe and, less efficiently, Met from aminoacyl-tRNAs to the N-termini of proteins containing an N-terminal arginine or lysine. This chain is Leucyl/phenylalanyl-tRNA--protein transferase, found in Paramagnetospirillum magneticum (strain ATCC 700264 / AMB-1) (Magnetospirillum magneticum).